Here is a 186-residue protein sequence, read N- to C-terminus: ADP-ribosylation factor-like protein 6 (186 aa).

A lipid anchor (N-myristoyl glycine) is attached at Gly2. GTP is bound by residues 24 to 31 (GLDNSGKT), 69 to 73 (DMSGQ), and 130 to 133 (NKMD).

It belongs to the small GTPase superfamily. Arf family. In terms of assembly, interacts with SEC61B, ARL6IP1, ARL6IP2, ARL6IP3, ARL6IP4 ARL6IP5 and ARL6IP6. Interacts (GTP-bound form) with the BBSome a complex that contains BBS1, BBS2, BBS4, BBS5, BBS7, BBS8/TTC8, BBS9 and BBIP10. Interacts (GTP-free form) with IFT27.

Its subcellular location is the cell projection. The protein localises to the cilium membrane. It is found in the cytoplasm. The protein resides in the cytoskeleton. It localises to the cilium axoneme. Its subcellular location is the cilium basal body. Functionally, involved in membrane protein trafficking at the base of the ciliary organelle. Mediates recruitment onto plasma membrane of the BBSome complex which would constitute a coat complex required for sorting of specific membrane proteins to the primary cilia. Together with the BBSome complex and LTZL1, controls SMO ciliary trafficking and contributes to the sonic hedgehog (SHH) pathway regulation. May regulate cilia assembly and disassembly and subsequent ciliary signaling events such as the Wnt signaling cascade. Isoform 2 may be required for proper retinal function and organization. This is ADP-ribosylation factor-like protein 6 (ARL6) from Bos taurus (Bovine).